Here is a 584-residue protein sequence, read N- to C-terminus: Aspartate--tRNA(Asp/Asn) ligase (584 aa).

Residue Glu-177 coordinates L-aspartate. The segment at 201-204 (QLFK) is aspartate. Arg-223 contributes to the L-aspartate binding site. ATP is bound by residues 223–225 (RDE) and Gln-232. His-447 is a binding site for L-aspartate. Glu-481 lines the ATP pocket. Arg-488 provides a ligand contact to L-aspartate. 533–536 (GLDR) provides a ligand contact to ATP.

Belongs to the class-II aminoacyl-tRNA synthetase family. Type 1 subfamily. As to quaternary structure, homodimer.

The protein resides in the cytoplasm. The catalysed reaction is tRNA(Asx) + L-aspartate + ATP = L-aspartyl-tRNA(Asx) + AMP + diphosphate. Aspartyl-tRNA synthetase with relaxed tRNA specificity since it is able to aspartylate not only its cognate tRNA(Asp) but also tRNA(Asn). Reaction proceeds in two steps: L-aspartate is first activated by ATP to form Asp-AMP and then transferred to the acceptor end of tRNA(Asp/Asn). The sequence is that of Aspartate--tRNA(Asp/Asn) ligase from Chlamydia caviae (strain ATCC VR-813 / DSM 19441 / 03DC25 / GPIC) (Chlamydophila caviae).